A 274-amino-acid chain; its full sequence is Serine acetyltransferase (274 aa).

Belongs to the transferase hexapeptide repeat family.

It localises to the cytoplasm. It carries out the reaction L-serine + acetyl-CoA = O-acetyl-L-serine + CoA. It participates in amino-acid biosynthesis; L-cysteine biosynthesis; L-cysteine from L-serine: step 1/2. This Buchnera aphidicola subsp. Acyrthosiphon pisum (strain APS) (Acyrthosiphon pisum symbiotic bacterium) protein is Serine acetyltransferase (cysE).